The following is a 600-amino-acid chain: Polypeptide N-acetylgalactosaminyltransferase (600 aa).

At 1–7 the chain is on the cytoplasmic side; it reads MVRRKLR. The helical; Signal-anchor for type II membrane protein transmembrane segment at 8–28 threads the bilayer; sequence LLVILAGIWLVGIVVYLFKGD. Topologically, residues 29–600 are lumenal; the sequence is DQSEFEKRVI…KWTFSLSKNR (572 aa). Cystine bridges form between C154-C382, C373-C451, C484-C501, C524-C541, and C567-C583. The tract at residues 163-268 is catalytic subdomain A; the sequence is LPDTSVIITF…EKWLEPLLDR (106 aa). Residues T171, D204, and R229 each contribute to the substrate site. Mn(2+) is bound at residue D252. S253 provides a ligand contact to substrate. Position 254 (H254) interacts with Mn(2+). The tract at residues 328-390 is catalytic subdomain B; sequence PIRTPMIAGG…PCSRVGHVFR (63 aa). A substrate-binding site is contributed by W359. Position 387 (H387) interacts with Mn(2+). Positions 390, 393, and 395 each coordinate substrate. Positions 466–595 constitute a Ricin B-type lectin domain; it reads KIPSVQDIAF…SSYTQKWTFS (130 aa).

The protein belongs to the glycosyltransferase 2 family. GalNAc-T subfamily. Requires Mn(2+) as cofactor. O-glycosylated.

The protein localises to the golgi apparatus membrane. It catalyses the reaction L-seryl-[protein] + UDP-N-acetyl-alpha-D-galactosamine = a 3-O-[N-acetyl-alpha-D-galactosaminyl]-L-seryl-[protein] + UDP + H(+). The enzyme catalyses L-threonyl-[protein] + UDP-N-acetyl-alpha-D-galactosamine = a 3-O-[N-acetyl-alpha-D-galactosaminyl]-L-threonyl-[protein] + UDP + H(+). The protein operates within protein modification; protein glycosylation. With respect to regulation, no change in activity by addition of up to 10% methanol or glycerol, or 5% acetonitrile. 40% reduction in activity by 10% acetonitrile or by lyophilization. Activity requires divalent cations, the best being Mn(2+) (10-20 mM), followed by Co(2+), Mg(2+) and Ca(2+). Loss of activity with Cu(2+) or in the presence of EDTA. Inhibited by UDP, but not by UMP, UTP, ADP or GDP nucleotides. No inhibition by galactose, N-acetylglucosamine or N-acetylgalactosamine sugars. Functionally, catalyzes the initial reaction in O-linked oligosaccharide biosynthesis, the transfer of an N-acetyl-D-galactosamine residue to a serine or threonine residue on the protein receptor. Has a broad substrate specificity. Acceptor peptides include Muc2, Muc5Ac, Muc1a and Muc1a', with Muc2 as the best acceptor. Acts on non-glycosylated and mono- or multi-glycosylated peptide substrates. Transfers preferably to threonine rather than serine residue. Thr-15 is the most preferred site of glycosylation in Muc2 peptide PTTTPITTTTTVTPTPTPTGTQTK having proline residues at position -1, and at positions +1 and +3, where the number represents the distance from the C-terminal and N-terminal hydroxyl amino acid, respectively. Transfer of the N-acetyl-D-galactosamine (GalNAc) is optimal with proline residues at positions -3, -1, +1 and +3, but other amino acids are tolerated, although some, such as phenylalanine, isoleucine or leucine at -1, or lysine at +3 prevent the transfer completely. Second GalNAc is transferred to Muc2 Thr-2 or Thr-13, both of which have two proline residues nearby. Up to nine sites can be glycosylated within Muc2, but eight are used simultaneously since Thr-19 and Thr-21 are not detected to be glycosylated at the same time. Glycosylation is not detected of a potential site, which is next to an already glycosylated site, but only one amino acid is needed in between two glycosylation sites. Ser-5 is the preferred glycosylation site in Muc5Ac peptide GTTPSPVPTTSTTSAP into which up to four GalNAcs can be attached. Only the threonine residues are detected as pontential glycosylation sites in Muc1a APPAHGVTSAPDTRPAPGC and Muc1a' AHGVTSAPDTR peptides. Transferase activity is restricted to UDP-GalNAc as a donor, and none of the nucleotide sugars UDP-Gal, UDP-GlcNAc, GDP-fucose, UDP-xylose, UDP-glucuronic acid or CMP-neuraminic acid are utilized as donors. The protein is Polypeptide N-acetylgalactosaminyltransferase of Biomphalaria glabrata (Bloodfluke planorb).